The sequence spans 952 residues: MSLPSRQMAIVNPPPPEYINAKKTGRLTNQLQFLQRVVLKALWKHSFSWPFQQPVDAAKLKLPDYYTIIETPMDLSTIKKRLENRYYEKASECVGDFNTMFSNCYLYNKPGDDIVVMAQALEKLFMQKLSQMPQEEQIVGGKERMKKDIQQKTAVSSAKEQTPSKSAENVFKRQEIPAGFPDVCLSPLNMAQEAPPTCDSQTVVQITKGVKRRADTTTPTTSSAKASSESPPPLREAKPANAPVKENTVKSVLPDSQQQHRVLKTVKVTEQLKHCSEILKEMLAKKHLPYAWPFYNPVDVDALGLHNYYDIVKNPMDLGTIKGKMDKQEYKDACEFAADVRLMFMNCYKYNPPDHEVVTMARMLQDVFEMHFAKIPDEPVESMRACHLTTNSAKALSRESSSEASSGDCSSEDSEDERVQRLAKLQEQLNAVHQQLQVLSQVPLRKLKKKNEKSKRAPKRKKVNRDENPKKKAKQMKQKEKAKSNQPKKKKPLLKLEEEDNAKPMNYDEKRQLSLDINKLPGDKLGRIVHIIQSREPSLRNSNPDEIEIDFETLKASTLRELEKYVLACLRKRSLKPHAKKVVRSKEELHSEKKLELERRLLDVNNQLNCRKRQTKRPAKVAVSPRPPLPPPPPPPPELASGSRLSDSSSSSSSSGSGSSSSSSSSSGSGSSSSDSSSSDSSDSEPEISPKFTGVKQNDLPSKENTKQIQCSVPDITSAETALVQQSTGPCGAPGKPPQQMPGCQVPHHLQATESTASVQTQPLAGDCKRVLHGPPVVHASAESHTVLELQCHAPVQKDIKIKNADSWKSLGKPVKASSVLKSSDELFNQFRKAAIEKEVKARTQEQIRKHLEHSAKDPKVSQESQREFGSGFTPESSSNKVQGRSHGEEQSEQQQLPSPSETQDISKLWLLKDRNLAREKEQERRRREAMAGTIDMTLQSDIMTMFENNFD.

A Bromo 1 domain is found at 26–132 (RLTNQLQFLQ…KLFMQKLSQM (107 aa)). Basic and acidic residues predominate over residues 141–150 (GKERMKKDIQ). Residues 141–168 (GKERMKKDIQQKTAVSSAKEQTPSKSAE) form a disordered region. Over residues 151 to 167 (QKTAVSSAKEQTPSKSA) the composition is skewed to polar residues. Phosphoserine is present on S186. The Nuclear localization signal signature appears at 208-219 (KGVKRRADTTTP). The disordered stretch occupies residues 209–257 (GVKRRADTTTPTTSSAKASSESPPPLREAKPANAPVKENTVKSVLPDSQ). The segment covering 216–229 (TTTPTTSSAKASSE) has biased composition (low complexity). A Bromo 2 domain is found at 266–375 (VKVTEQLKHC…DVFEMHFAKI (110 aa)). Disordered stretches follow at residues 392–420 (SAKALSRESSSEASSGDCSSEDSEDERVQ), 442–504 (VPLR…NAKP), 607–746 (QLNC…GCQV), and 850–930 (KHLE…RREA). A coiled-coil region spans residues 417–442 (ERVQRLAKLQEQLNAVHQQLQVLSQV). The segment covering 445-463 (RKLKKKNEKSKRAPKRKKV) has biased composition (basic residues). Residues 495 to 577 (KLEEEDNAKP…ACLRKRSLKP (83 aa)) enclose the NET domain. The segment covering 610–619 (CRKRQTKRPA) has biased composition (basic residues). Over residues 625–638 (PRPPLPPPPPPPPE) the composition is skewed to pro residues. Residues 646 to 681 (SDSSSSSSSSGSGSSSSSSSSSGSGSSSSDSSSSDS) show a composition bias toward low complexity. Residues 718–729 (SAETALVQQSTG) are compositionally biased toward polar residues. Residues 837–936 (EKEVKARTQE…RREAMAGTID (100 aa)) are a coiled coil. Basic and acidic residues predominate over residues 850 to 867 (KHLEHSAKDPKVSQESQR). The segment covering 874–883 (TPESSSNKVQ) has biased composition (polar residues). Low complexity predominate over residues 893 to 902 (EQQQLPSPSE). Residues 911-930 (LLKDRNLAREKEQERRRREA) show a composition bias toward basic and acidic residues.

It belongs to the BET family. In terms of assembly, interacts with the acetylated N-terminus of histone H1, H2, H3 and H4. Interacts with P-TEFb components CDK9 and CCNT1/cyclin-T1. Interacts with mRNA splicing machinery proteins SRSF2, DDX5, HNRNPK and TARDBP. Interacts with SMARCE1. In terms of processing, ubiquitinated in a SPOP-dependent manner, leading to proteasomal degradation.

It localises to the nucleus. Testis-specific chromatin protein that specifically binds histone H4 acetylated at 'Lys-5' and 'Lys-8' (H4K5ac and H4K8ac, respectively) and plays a key role in spermatogenesis. Required in late pachytene spermatocytes: plays a role in meiotic and post-meiotic cells by binding to acetylated histones at the promoter of specific meiotic and post-meiotic genes, facilitating their activation at the appropriate time. In the post-meiotic phase of spermatogenesis, binds to hyperacetylated histones and participates in their general removal from DNA. Also recognizes and binds a subset of butyrylated histones: able to bind histone H4 butyrylated at 'Lys-8' (H4K8ac), while it is not able to bind H4 butyrylated at 'Lys-5' (H4K5ac). Also acts as a component of the splicing machinery in pachytene spermatocytes and round spermatids and participates in 3'-UTR truncation of specific mRNAs in post-meiotic spermatids. Required for chromocenter organization, a structure comprised of peri-centromeric heterochromatin. The chain is Bromodomain testis-specific protein (Brdt) from Rattus norvegicus (Rat).